A 207-amino-acid polypeptide reads, in one-letter code: Imidazole glycerol phosphate synthase subunit HisH (207 aa).

Positions 1-207 constitute a Glutamine amidotransferase type-1 domain; it reads MIGIIDYGMG…KRFGQLVEGN (207 aa). Catalysis depends on Cys79, which acts as the Nucleophile. Active-site residues include His185 and Glu187.

In terms of assembly, heterodimer of HisH and HisF.

The protein resides in the cytoplasm. The enzyme catalyses 5-[(5-phospho-1-deoxy-D-ribulos-1-ylimino)methylamino]-1-(5-phospho-beta-D-ribosyl)imidazole-4-carboxamide + L-glutamine = D-erythro-1-(imidazol-4-yl)glycerol 3-phosphate + 5-amino-1-(5-phospho-beta-D-ribosyl)imidazole-4-carboxamide + L-glutamate + H(+). The catalysed reaction is L-glutamine + H2O = L-glutamate + NH4(+). It participates in amino-acid biosynthesis; L-histidine biosynthesis; L-histidine from 5-phospho-alpha-D-ribose 1-diphosphate: step 5/9. In terms of biological role, IGPS catalyzes the conversion of PRFAR and glutamine to IGP, AICAR and glutamate. The HisH subunit catalyzes the hydrolysis of glutamine to glutamate and ammonia as part of the synthesis of IGP and AICAR. The resulting ammonia molecule is channeled to the active site of HisF. The chain is Imidazole glycerol phosphate synthase subunit HisH from Shouchella clausii (strain KSM-K16) (Alkalihalobacillus clausii).